The sequence spans 603 residues: MSSISQKVVIGLNKAAANNNLQNLDRRGFKTRCVSSSKAASCLRASCSLQLDVKPVQEGRRSGNYQPSIWDFNYVQSLNTPYKEERYLTRHAELIVQVKPLLEKKMEPAQQLELIDDLNNLGLSYFFQDRIKQILSFIYDENQCFHSNINDQAEKRDLYFTALGFRLLRQHGFDVSQEVFDCFKNDNGSDFKASLSDNTKGLLQLYEASFLVREGEDTLEQARQFATKFLRRKLDEIDDNHLLSCIHHSLEIPLHWRIQRLEARWFLDAYATRHDMNPVILELAKLDFNIIQATHQEELKDVSRWWQNTRLAEKLPFVRDRLVESYFWAIALFEPHQYGYQRRVAAKIITLATSIDDVYDIYGTLDELQLFTDNFRRWDTESLGRLPYSMQLFYMVIHNFVSELAYEILKEKGFIVIPYLQRSWVDLAESFLKEANWYYSGYTPSLEEYIDNGSISIGAVAVLSQVYFTLANSIEKPKIESMYKYHHILRLSGLLVRLHDDLGTSLFEKKRGDVPKAVEICMKERNVTEEEAEEHVKYLIREAWKEMNTATTAAGCPFMDELNVAAANLGRAAQFVYLDGDGHGVQHSKIHQQMGGLMFEPYV.

A chloroplast-targeting transit peptide spans 1–35; that stretch reads MSSISQKVVIGLNKAAANNNLQNLDRRGFKTRCVS. (2E)-geranyl diphosphate-binding residues include Arg-319, Asp-356, Asp-360, Arg-497, and Asp-500. Residues Asp-356 and Asp-360 each coordinate Mg(2+). The DDXXD motif motif lies at 356-360; sequence DDVYD. Residues Asp-500, Thr-504, and Glu-508 each contribute to the Mg(2+) site.

This sequence belongs to the terpene synthase family. Tpsb subfamily. In terms of assembly, monomer. Requires Mg(2+) as cofactor. It depends on Mn(2+) as a cofactor.

The protein localises to the plastid. It localises to the chloroplast. The catalysed reaction is (2E)-geranyl diphosphate + H2O = (2E)-geraniol + diphosphate. It participates in secondary metabolite biosynthesis; terpenoid biosynthesis. Its function is as follows. Monoterpene synthase (mono-TPS) involved in the biosynthesis of monoterpenes natural products. Catalyzes the conversion of (2E)-geranyl diphosphate (GPP) into geraniol. The sequence is that of Geraniol synthase, chloroplastic from Perilla frutescens var. hirtella (Perilla citriodora).